The primary structure comprises 351 residues: Uroporphyrinogen decarboxylase (351 aa).

Substrate-binding positions include 26–30 (RQAGR), Phe45, Asp76, Tyr153, Ser208, and His323.

Belongs to the uroporphyrinogen decarboxylase family. Homodimer.

Its subcellular location is the cytoplasm. The catalysed reaction is uroporphyrinogen III + 4 H(+) = coproporphyrinogen III + 4 CO2. Its pathway is porphyrin-containing compound metabolism; protoporphyrin-IX biosynthesis; coproporphyrinogen-III from 5-aminolevulinate: step 4/4. Catalyzes the decarboxylation of four acetate groups of uroporphyrinogen-III to yield coproporphyrinogen-III. The polypeptide is Uroporphyrinogen decarboxylase (Prochlorococcus marinus (strain SARG / CCMP1375 / SS120)).